The following is a 397-amino-acid chain: 8-amino-7-oxononanoate synthase (397 aa).

Position 23 (Arg-23) interacts with substrate. 110 to 111 (GY) is a pyridoxal 5'-phosphate binding site. His-135 is a substrate binding site. Residues Ser-181, His-209, and Thr-237 each contribute to the pyridoxal 5'-phosphate site. Lys-240 carries the N6-(pyridoxal phosphate)lysine modification. Substrate is bound at residue Thr-354.

The protein belongs to the class-II pyridoxal-phosphate-dependent aminotransferase family. BioF subfamily. Homodimer. It depends on pyridoxal 5'-phosphate as a cofactor.

It carries out the reaction 6-carboxyhexanoyl-[ACP] + L-alanine + H(+) = (8S)-8-amino-7-oxononanoate + holo-[ACP] + CO2. Its pathway is cofactor biosynthesis; biotin biosynthesis. Functionally, catalyzes the decarboxylative condensation of pimeloyl-[acyl-carrier protein] and L-alanine to produce 8-amino-7-oxononanoate (AON), [acyl-carrier protein], and carbon dioxide. The protein is 8-amino-7-oxononanoate synthase of Anaeromyxobacter dehalogenans (strain 2CP-C).